A 900-amino-acid chain; its full sequence is Formin-like protein 5 (900 aa).

The helical; Signal-anchor transmembrane segment at 15–32 (SRLVFWLILFSGLLVITL) threads the bilayer. Positions 136 to 209 (RNLATKPGSS…PVSPAKKKED (74 aa)) are disordered. Positions 160–173 (PPRPPTRPKSPPPR) are enriched in pro residues. The helical transmembrane segment at 214–234 (IIIAVVVTAVSTFLLAALFFL) threads the bilayer. Disordered regions lie at residues 273–440 (SVKG…DAPK) and 849–900 (ARGR…SDSD). Over residues 281 to 304 (HQSFNIYSNQGKMSSFDGSNSDTS) the composition is skewed to polar residues. Residues 307 to 316 (LEERLSHEGL) are compositionally biased toward basic and acidic residues. Over residues 359–368 (FLKVSSKKAS) the composition is skewed to low complexity. A compositionally biased stretch (pro residues) spans 369–429 (APPPPVPAPQ…GPKAPRPPSG (61 aa)). The region spanning 433-865 (ALDDDAPKTK…MARKQGSTAS (433 aa)) is the FH2 domain. A compositionally biased stretch (polar residues) spans 860–876 (QGSTASASSETPRQTPS).

Belongs to the formin-like family. Class-I subfamily. In terms of tissue distribution, expressed in the endosperm. Localizes to the cell plate, a plant-specific membranous component that is assembled at the plane of cell division.

It localises to the membrane. In terms of biological role, might be involved in the organization and polarity of the actin cytoskeleton. Interacts with the barbed end of actin filaments and nucleates actin-filament polymerization in vitro. Seems to play a role in cytokinesis. The chain is Formin-like protein 5 (FH5) from Arabidopsis thaliana (Mouse-ear cress).